A 323-amino-acid polypeptide reads, in one-letter code: Acetyl-coenzyme A carboxylase carboxyl transferase subunit alpha (323 aa).

Residues L40–T293 form the CoA carboxyltransferase C-terminal domain.

The protein belongs to the AccA family. In terms of assembly, acetyl-CoA carboxylase is a heterohexamer composed of biotin carboxyl carrier protein (AccB), biotin carboxylase (AccC) and two subunits each of ACCase subunit alpha (AccA) and ACCase subunit beta (AccD).

Its subcellular location is the cytoplasm. The enzyme catalyses N(6)-carboxybiotinyl-L-lysyl-[protein] + acetyl-CoA = N(6)-biotinyl-L-lysyl-[protein] + malonyl-CoA. It functions in the pathway lipid metabolism; malonyl-CoA biosynthesis; malonyl-CoA from acetyl-CoA: step 1/1. Functionally, component of the acetyl coenzyme A carboxylase (ACC) complex. First, biotin carboxylase catalyzes the carboxylation of biotin on its carrier protein (BCCP) and then the CO(2) group is transferred by the carboxyltransferase to acetyl-CoA to form malonyl-CoA. The chain is Acetyl-coenzyme A carboxylase carboxyl transferase subunit alpha from Polynucleobacter necessarius subsp. necessarius (strain STIR1).